We begin with the raw amino-acid sequence, 1142 residues long: E3 ubiquitin-protein ligase TRIM33 (1142 aa).

The segment covering 1 to 18 (MAENKGGGEAESGGGGSG) has biased composition (gly residues). The interval 1-132 (MAENKGGGEA…PGSSSGPPLG (132 aa)) is disordered. The segment at 1–163 (MAENKGGGEA…AEPKLLPCLH (163 aa)) is necessary for E3 ubiquitin-protein ligase activity and repression of SMAD4 signaling and transcriptional repression. The segment covering 19–42 (SAPVTAGAAGPTAQEAEPPLAAVL) has biased composition (low complexity). A compositionally biased stretch (gly residues) spans 52–64 (RAGAEGGAAGPDD). Positions 65 to 99 (GGVAAASSSSAPAASVPAASVGSAVPGGAASTPAP) are enriched in low complexity. Pro residues predominate over residues 100-122 (AAAPAPAPAPAPAPAPAPAPAPA). The segment at 141-201 (CAVCQQSLQS…VGVIRCPVCR (61 aa)) adopts an RING-type zinc-finger fold. 2 B box-type zinc fingers span residues 228–275 (KSEQ…IRKK) and 287–328 (QRPV…YQFL). Residues cysteine 233, cysteine 236, cysteine 257, histidine 261, cysteine 292, histidine 295, cysteine 315, and histidine 320 each coordinate Zn(2+). The necessary for oligomerization stretch occupies residues 315 to 417 (CQLLEHKEHR…QMKLLQQQND (103 aa)). A coiled-coil region spans residues 315–417 (CQLLEHKEHR…QMKLLQQQND (103 aa)). Residues lysine 345, lysine 350, lysine 497, and lysine 520 each participate in a glycyl lysine isopeptide (Lys-Gly) (interchain with G-Cter in SUMO2) cross-link. Arginine 531 is modified (asymmetric dimethylarginine; alternate). Position 531 is an omega-N-methylarginine; alternate (arginine 531). Residue lysine 543 forms a Glycyl lysine isopeptide (Lys-Gly) (interchain with G-Cter in SUMO2) linkage. Omega-N-methylarginine is present on arginine 551. The residue at position 593 (arginine 593) is an Asymmetric dimethylarginine. Arginine 607 is subject to Asymmetric dimethylarginine; alternate. Residue arginine 607 is modified to Omega-N-methylarginine; alternate. 2 positions are modified to asymmetric dimethylarginine: arginine 614 and arginine 620. Disordered stretches follow at residues 657–676 (PTSP…TSPS), 688–707 (NPEN…EDAG), and 718–834 (YISG…PPLS). Positions 738-774 (PSALSPGSSGLSNSHTPVRPPSTSSTGSRGSCGSSGR) are enriched in low complexity. Composition is skewed to basic and acidic residues over residues 775-794 (TAEK…KQEP) and 808-817 (KQEKTEDGRR). N6-acetyllysine; alternate is present on residues lysine 778 and lysine 784. Glycyl lysine isopeptide (Lys-Gly) (interchain with G-Cter in SUMO2); alternate cross-links involve residues lysine 778 and lysine 784. A Glycyl lysine isopeptide (Lys-Gly) (interchain with G-Cter in SUMO2) cross-link involves residue lysine 789. Residues lysine 791 and lysine 808 each participate in a glycyl lysine isopeptide (Lys-Gly) (interchain with G-Cter in SUMO2); alternate cross-link. Glycyl lysine isopeptide (Lys-Gly) (interchain with G-Cter in SUMO1); alternate cross-links involve residues lysine 791 and lysine 808. An N6-acetyllysine; alternate modification is found at lysine 808. Residue lysine 811 forms a Glycyl lysine isopeptide (Lys-Gly) (interchain with G-Cter in SUMO2) linkage. Residue serine 818 is modified to Phosphoserine. A compositionally biased stretch (low complexity) spans 822–834 (LSSPESSLTPPLS). Threonine 830 is subject to Phosphothreonine. Lysine 876 participates in a covalent cross-link: Glycyl lysine isopeptide (Lys-Gly) (interchain with G-Cter in SUMO2). Serine 877 carries the post-translational modification Phosphoserine. The PHD-type zinc-finger motif lies at 902 to 949 (EDWCAVCQNGGDLLCCEKCPKVFHLTCHVPTLLSFPSGDWICTFCRDI). N6-acetyllysine is present on lysine 966. Lysine 968 is subject to N6-acetyllysine; alternate. Residue lysine 968 forms a Glycyl lysine isopeptide (Lys-Gly) (interchain with G-Cter in SUMO2); alternate linkage. One can recognise a Bromo domain in the interval 972-1095 (GLSPVDQRKC…LYFEDKLSEI (124 aa)). Glycyl lysine isopeptide (Lys-Gly) (interchain with G-Cter in SUMO2) cross-links involve residues lysine 1022 and lysine 1058. Threonine 1066 is modified (phosphothreonine). Lysine 1072 is covalently cross-linked (Glycyl lysine isopeptide (Lys-Gly) (interchain with G-Cter in SUMO2)). The tract at residues 1103 to 1142 (PLPEFEQDEDDGEVTEDSDEDFIQPRRKRLKSDERPVHIK) is disordered. Positions 1107-1124 (FEQDEDDGEVTEDSDEDF) are enriched in acidic residues. Threonine 1117 carries the phosphothreonine modification. Serine 1120 is subject to Phosphoserine. Lysine 1133 is covalently cross-linked (Glycyl lysine isopeptide (Lys-Gly) (interchain with G-Cter in SUMO2)). Residues 1133 to 1142 (KSDERPVHIK) show a composition bias toward basic and acidic residues. At serine 1134 the chain carries Phosphoserine.

Belongs to the TRIM/RBCC family. Homooligomer and heterooligomer with TRIM24 and TRIM28 family members. Interacts with SMAD4 in unstimulated cells. Found in a complex with SMAD2 and SMAD3 upon addition of TGF-beta. Interacts with SMAD2 and SMAD3. Interacts with SMAD4 under basal and induced conditions and, upon TGF-beta signaling, with activated SMAD2. Forms a ternary complex with SMAD4 and SMAD2 upon TGF-beta signaling. Sumoylated with SUMO1. In terms of tissue distribution, ubiquitous with high level in testis.

It is found in the nucleus. It carries out the reaction S-ubiquitinyl-[E2 ubiquitin-conjugating enzyme]-L-cysteine + [acceptor protein]-L-lysine = [E2 ubiquitin-conjugating enzyme]-L-cysteine + N(6)-ubiquitinyl-[acceptor protein]-L-lysine.. It participates in protein modification; protein ubiquitination. In terms of biological role, acts as an E3 ubiquitin-protein ligase. Promotes SMAD4 ubiquitination, nuclear exclusion and degradation via the ubiquitin proteasome pathway. May act as a transcriptional repressor. Inhibits the transcriptional response to TGF-beta/BMP signaling cascade. Plays a role in the control of cell proliferation. Its association with SMAD2 and SMAD3 stimulates erythroid differentiation of hematopoietic stem/progenitor. Monoubiquitinates SMAD4 and acts as an inhibitor of SMAD4-dependent TGF-beta/BMP signaling cascade (Monoubiquitination of SMAD4 hampers its ability to form a stable complex with activated SMAD2/3 resulting in inhibition of TGF-beta/BMP signaling cascade). This is E3 ubiquitin-protein ligase TRIM33 (Trim33) from Mus musculus (Mouse).